We begin with the raw amino-acid sequence, 160 residues long: Endoribonuclease YbeY (160 aa).

The Zn(2+) site is built by H112, H116, and H122. A disordered region spans residues 141-160 (ELGHPDPYACDDEEPPSKEK).

The protein belongs to the endoribonuclease YbeY family. It depends on Zn(2+) as a cofactor.

It localises to the cytoplasm. In terms of biological role, single strand-specific metallo-endoribonuclease involved in late-stage 70S ribosome quality control and in maturation of the 3' terminus of the 16S rRNA. This Pseudomonas aeruginosa (strain UCBPP-PA14) protein is Endoribonuclease YbeY.